The sequence spans 204 residues: Thymidine kinase (204 aa).

ATP-binding positions include 23-30 (GSMFSGKT) and 95-98 (DEAQ). Catalysis depends on Glu-96, which acts as the Proton acceptor. Cys-152, Cys-155, Cys-184, and Cys-187 together coordinate Zn(2+).

It belongs to the thymidine kinase family. In terms of assembly, homotetramer.

It localises to the cytoplasm. It catalyses the reaction thymidine + ATP = dTMP + ADP + H(+). The sequence is that of Thymidine kinase from Porphyromonas gingivalis (strain ATCC 33277 / DSM 20709 / CIP 103683 / JCM 12257 / NCTC 11834 / 2561).